Here is a 572-residue protein sequence, read N- to C-terminus: Sulfate adenylyltransferase (572 aa).

Residues 1 to 169 are N-terminal; sequence MANAPHGGVL…IEAVNKLNHY (169 aa). The catalytic stretch occupies residues 170 to 393; the sequence is DYVALRYTPA…LRESNPPRAT (224 aa). Q197 provides a ligand contact to sulfate. ATP-binding positions include 197-200 and 291-294; these read QTRN and GRDH. Residues T198, R199, and N200 contribute to the active site. R199 contacts sulfate. A295 contacts sulfate. V333 lines the ATP pocket. The segment at 394 to 572 is allosteric regulation domain; adenylyl-sulfate kinase-like; sequence QGFTIFLTGY…LESQGFLERQ (179 aa). 3'-phosphoadenylyl sulfate-binding positions include 433-436, R450, 476-477, and R514; these read DTVR and IA.

It in the N-terminal section; belongs to the sulfate adenylyltransferase family. The protein in the C-terminal section; belongs to the APS kinase family. As to quaternary structure, homohexamer. Dimer of trimers.

The protein localises to the cytoplasm. The enzyme catalyses sulfate + ATP + H(+) = adenosine 5'-phosphosulfate + diphosphate. Its pathway is sulfur metabolism; hydrogen sulfide biosynthesis; sulfite from sulfate: step 1/3. With respect to regulation, allosterically inhibited by 3'-phosphoadenosine 5'-phosphosulfate (PAPS). Its function is as follows. Catalyzes the first intracellular reaction of sulfate assimilation, forming adenosine-5'-phosphosulfate (APS) from inorganic sulfate and ATP. Plays an important role in sulfate activation as a component of the biosynthesis pathway of sulfur-containing amino acids. The sequence is that of Sulfate adenylyltransferase from Penicillium chrysogenum (Penicillium notatum).